The following is a 546-amino-acid chain: Histidine--tRNA ligase, mitochondrial (546 aa).

A mitochondrion-targeting transit peptide spans 1–20 (MLSRSLNKVVTSIKSSSIIR). L-histidine is bound by residues 129 to 131 (DLT), Arg156, Gln172, Asp176, Arg326, and 330 to 331 (YY).

It belongs to the class-II aminoacyl-tRNA synthetase family.

Its subcellular location is the cytoplasm. The protein localises to the mitochondrion. It carries out the reaction tRNA(His) + L-histidine + ATP = L-histidyl-tRNA(His) + AMP + diphosphate + H(+). Catalyzes the aminoacylation of histidyl-tRNA in both the cytoplasm and the mitochondrion. The protein is Histidine--tRNA ligase, mitochondrial (HTS1) of Saccharomyces cerevisiae (strain ATCC 204508 / S288c) (Baker's yeast).